The primary structure comprises 468 residues: MFSPILSLEIILALATLQSVFAVELQHVLGVNDRPYPQRTDDQYNILRHLGGLGPYIGYNGWGIAAESEIESCTIDQAHLLMRHGERYPSTNVGKQLEALYQKLLDADVEVPTGPLSFFQDYDYFVSDAAWYEQETTKGFYSGLNTAFDFGTTLRERYDHLINTSEEGKKLSVWAGSQERVVDTAKYFAQGFMKSNYTDMVEVVALEEEKSQGLNSLTARISCPNYNSHIYKDGDFPNDIAEREADRLNTLSPGFNITADDIPTIALYCGFELNVRGESSFCDVLSREALLYTAYLRDLGWYYNVGNGNPLGKTIGYVYANATRQLLENTEADPRDYPLYFSFSHDTDLLQVFTSLGLFNVTDLPLDQIQFQTSFKSTEIVPMGARLLTERLLCTVEGEEKYYVRTILNDAVFPLSDCSSGPGFSCPLNDYVSRLEALNEDSDFAENCGVPKNASYPLELSFFWDDLS.

An N-terminal signal peptide occupies residues 1–22; it reads MFSPILSLEIILALATLQSVFA. H84 serves as the catalytic Nucleophile. 4 N-linked (GlcNAc...) asparagine glycosylation sites follow: N163, N196, N256, and N321. D346 functions as the Proton donor in the catalytic mechanism. N360 and N453 each carry an N-linked (GlcNAc...) asparagine glycan.

The protein belongs to the histidine acid phosphatase family.

The enzyme catalyses a phosphate monoester + H2O = an alcohol + phosphate. The polypeptide is Acid phosphatase PHO1 (PHO1) (Komagataella pastoris (Yeast)).